A 1246-amino-acid polypeptide reads, in one-letter code: MSKLLDRFRYFKQKGETFADGHGQVMHSNRDWEDSYRQRWQFDKIVRSTHGVNCTGSCSWKIYVKNGLVTWEIQQTDYPRTRPDLPNHEPRGCPRGASYSWYLYSANRLKYPLIRKRLIELWREALKQHSDPVLAWASIMNDPQKCLSYKQVRGRGGFIRSNWQELNQLIAAANVWTIKTYGPDRVAGFSPIPAMSMVSYAAGTRYLSLLGGTCLSFYDWYCDLPPASPMTWGEQTDVPESADWYNSSYIIAWGSNVPQTRTPDAHFFTEVRYKGTKTIAITPDYSEVAKLCDQWLAPKQGTDSALAMAMGHVILKEFHLDNPSDYFINYCRRYSDMPMLVMLEPRDDGSYVPGRMIRASDLVDGLGESNNPQWKTVAVNTAGELVVPNGSIGFRWGEKGKWNLESIAAGTETELSLTLLGQHDAVAGVAFPYFGGIENPHFRSVKHNPVLVRQLPVKNLTLVDGNTCPVVSVYDLVLANYGLDRGLEDENSAKDYAEIKPYTPAWGEQITGVPRQYIETIAREFADTAHKTHGRSMIILGAGVNHWYHMDMNYRGMINMLIFCGCVGQSGGGWAHYVGQEKLRPQTGWLPLAFALDWNRPPRQMNSTSFFYNHSSQWRYEKVSAQELLSPLADASKYSGHLIDFNVRAERMGWLPSAPQLGRNPLGIKAEADKAGLSPTEFTAQALKSGDLRMACEQPDSSSNHPRNLFVWRSNLLGSSGKGHEYMQKYLLGTESGIQGEELGASDGIKPEEVEWQTAAIEGKLDLLVTLDFRMSSTCLFSDIVLPTATWYEKDDMNTSDMHPFIHPLSAAVDPAWESRSDWEIYKGIAKAFSQVCVGHLGKETDVVLQPLLHDSPAELSQPCEVLDWRKGECDLIPGKTAPNIVAVERDYPATYERFTSLGPLMDKLGNGGKGISWNTQDEIDFLGKLNYTKRDGPAQGRPLIDTAIDASEVILALAPETNGHVAVKAWQALGEITGREHTHLALHKEDEKIRFRDIQAQPRKIISSPTWSGLESDHVSYNAGYTNVHELIPWRTLSGRQQLYQDHPWMRAFGESLVAYRPPIDTRSVSEMRQIPPNGFPEKALNFLTPHQKWGIHSTYSENLLMLTLSRGGPIVWISETDARELTIVDNDWVEVFNANGALTARAVVSQRVPPGMTMMYHAQERIMNIPGSEVTGMRGGIHNSVTRVCPKPTHMIGGYAQLAWGFNYYGTVGSNRDEFIMIRKMKNVNWLDDEGRDQVQEAKK.

In terms of domain architecture, 4Fe-4S Mo/W bis-MGD-type spans 43-107 (DKIVRSTHGV…SYSWYLYSAN (65 aa)). Residues His-50, Cys-54, Cys-58, and Cys-93 each contribute to the [4Fe-4S] cluster site. Residue Asp-223 participates in Mo-bis(molybdopterin guanine dinucleotide) binding.

This sequence belongs to the prokaryotic molybdopterin-containing oxidoreductase family. In terms of assembly, tetramer composed of an alpha, a beta and 2 gamma chains. Alpha and beta are catalytic chains; gamma chain is involved in binding the enzyme complex to the cytoplasmic membrane. Requires [4Fe-4S] cluster as cofactor. Mo-bis(molybdopterin guanine dinucleotide) serves as cofactor.

The protein resides in the cell membrane. The catalysed reaction is nitrate + a quinol = a quinone + nitrite + H2O. In terms of biological role, this is a second nitrate reductase enzyme which can substitute for the NRA enzyme and allows E.coli to use nitrate as an electron acceptor during anaerobic growth. Its function is as follows. The alpha chain is the actual site of nitrate reduction. The sequence is that of Respiratory nitrate reductase 2 alpha chain (narZ) from Escherichia coli (strain K12).